A 125-amino-acid chain; its full sequence is Phosphoribosyl-AMP cyclohydrolase (125 aa).

D74 contributes to the Mg(2+) binding site. C75 provides a ligand contact to Zn(2+). Residues D76 and D78 each coordinate Mg(2+). Zn(2+) is bound by residues C92 and C99.

It belongs to the PRA-CH family. Homodimer. Mg(2+) serves as cofactor. The cofactor is Zn(2+).

It is found in the cytoplasm. It carries out the reaction 1-(5-phospho-beta-D-ribosyl)-5'-AMP + H2O = 1-(5-phospho-beta-D-ribosyl)-5-[(5-phospho-beta-D-ribosylamino)methylideneamino]imidazole-4-carboxamide. It participates in amino-acid biosynthesis; L-histidine biosynthesis; L-histidine from 5-phospho-alpha-D-ribose 1-diphosphate: step 3/9. Catalyzes the hydrolysis of the adenine ring of phosphoribosyl-AMP. This is Phosphoribosyl-AMP cyclohydrolase from Pelobacter propionicus (strain DSM 2379 / NBRC 103807 / OttBd1).